Here is a 240-residue protein sequence, read N- to C-terminus: Phosphoribosylaminoimidazole-succinocarboxamide synthase (240 aa).

This sequence belongs to the SAICAR synthetase family.

It catalyses the reaction 5-amino-1-(5-phospho-D-ribosyl)imidazole-4-carboxylate + L-aspartate + ATP = (2S)-2-[5-amino-1-(5-phospho-beta-D-ribosyl)imidazole-4-carboxamido]succinate + ADP + phosphate + 2 H(+). The protein operates within purine metabolism; IMP biosynthesis via de novo pathway; 5-amino-1-(5-phospho-D-ribosyl)imidazole-4-carboxamide from 5-amino-1-(5-phospho-D-ribosyl)imidazole-4-carboxylate: step 1/2. This Neorickettsia sennetsu (strain ATCC VR-367 / Miyayama) (Ehrlichia sennetsu) protein is Phosphoribosylaminoimidazole-succinocarboxamide synthase.